Consider the following 953-residue polypeptide: Lysosomal alpha-glucosidase (953 aa).

A signal peptide spans 1 to 27 (MNIRKPLCSNSVVGACTLVSLTTAVIL). The propeptide occupies 28–69 (GHLMLRELMLLPQDLHESSSGLWKTYRPHHQESYEPAPLHIQ). The region spanning 80–131 (TQCDVTPNSRFDCAPDKGITQEQCEARGCCWVPAGQVLNGPVMGQPWCFFPP) is the P-type domain. 3 disulfides stabilise this stretch: C82/C109, C92/C108, and C103/C127. N-linked (GlcNAc...) asparagine glycans are attached at residues N140, N233, and N390. D404 lines the substrate pocket. N470 carries N-linked (GlcNAc...) asparagine glycosylation. D518 functions as the Nucleophile in the catalytic mechanism. E521 is a catalytic residue. C533 and C558 are joined by a disulfide. R600 and D616 together coordinate substrate. C647 and C658 are disulfide-bonded. The N-linked (GlcNAc...) asparagine glycan is linked to N652. H674 provides a ligand contact to substrate. N883 and N926 each carry an N-linked (GlcNAc...) asparagine glycan.

It belongs to the glycosyl hydrolase 31 family.

It is found in the lysosome. It localises to the lysosome membrane. It carries out the reaction Hydrolysis of terminal, non-reducing (1-&gt;4)-linked alpha-D-glucose residues with release of alpha-D-glucose.. Its function is as follows. Essential for the degradation of glycogen in lysosomes. Has highest activity on alpha-1,4-linked glycosidic linkages, but can also hydrolyze alpha-1,6-linked glucans. In Rattus norvegicus (Rat), this protein is Lysosomal alpha-glucosidase (Gaa).